Consider the following 739-residue polypeptide: Cellulose synthase catalytic subunit [UDP-forming] (739 aa).

Helical transmembrane passes span valine 36–alanine 55, leucine 59–leucine 76, leucine 83–phenylalanine 101, and methionine 116–valine 138. A catalytic subdomain A region spans residues glutamate 157 to valine 250. Aspartate 199 is an active-site residue. The substrate site is built by aspartate 246 and aspartate 248. Positions glutamate 327 to methionine 387 are catalytic subdomain B. Aspartate 343 is an active-site residue. A run of 4 helical transmembrane segments spans residues phenylalanine 417–phenylalanine 436, isoleucine 440–threonine 462, proline 524–glycine 546, and alanine 551–alanine 573. The PilZ domain maps to glutamine 580–serine 677.

It belongs to the glycosyltransferase 2 family. It depends on Mg(2+) as a cofactor.

The protein localises to the cell inner membrane. The enzyme catalyses [(1-&gt;4)-beta-D-glucosyl](n) + UDP-alpha-D-glucose = [(1-&gt;4)-beta-D-glucosyl](n+1) + UDP + H(+). It participates in glycan metabolism; bacterial cellulose biosynthesis. Activated by bis-(3'-5') cyclic diguanylic acid (c-di-GMP). Catalytic subunit of cellulose synthase. It polymerizes uridine 5'-diphosphate glucose to cellulose, which is produced as an extracellular component responsible for the structural integrity and rigidity of self-supporting mats characteristic of the 'wrinkly spreader' phenotype. The polypeptide is Cellulose synthase catalytic subunit [UDP-forming] (bcsA) (Pseudomonas fluorescens (strain SBW25)).